A 104-amino-acid polypeptide reads, in one-letter code: ATP-dependent Clp protease adapter protein ClpS (104 aa).

The tract at residues M1–P20 is disordered.

It belongs to the ClpS family. In terms of assembly, binds to the N-terminal domain of the chaperone ClpA.

Involved in the modulation of the specificity of the ClpAP-mediated ATP-dependent protein degradation. The polypeptide is ATP-dependent Clp protease adapter protein ClpS (Synechococcus sp. (strain CC9902)).